Consider the following 517-residue polypeptide: Facilitated trehalose transporter Tret1 (517 aa).

Topologically, residues Met1 to Gln56 are cytoplasmic. The helical transmembrane segment at Val57–Thr77 threads the bilayer. Residues Ser78 to Ser100 lie on the Extracellular side of the membrane. N-linked (GlcNAc...) asparagine glycosylation is present at Asn88. The chain crosses the membrane as a helical span at residues Trp101–Ile121. The Cytoplasmic segment spans residues Glu122 to Thr135. Residues Pro136–Gly156 form a helical membrane-spanning segment. Residues Arg157–Ala158 are Extracellular-facing. Residues Leu159–Val179 traverse the membrane as a helical segment. Residues Gln180–Arg184 lie on the Cytoplasmic side of the membrane. A helical transmembrane segment spans residues Gly185–Ala205. Residues Gly206 to Ser212 are Extracellular-facing. Residues Glu213–Pro233 traverse the membrane as a helical segment. Residues Glu234–Pro296 are Cytoplasmic-facing. Residues Leu297–Phe317 traverse the membrane as a helical segment. The Extracellular segment spans residues Tyr318–Asn333. A helical transmembrane segment spans residues Leu334–Ile354. Residues Asp355–Lys360 are Cytoplasmic-facing. A helical transmembrane segment spans residues Met361 to Phe381. The Extracellular segment spans residues Tyr382–His392. A helical membrane pass occupies residues Ile393 to Gly413. The Cytoplasmic portion of the chain corresponds to Pro414 to Thr437. A helical membrane pass occupies residues Ala438–Ile458. Residues Gly459–His461 are Extracellular-facing. Residues Gly462 to Val482 form a helical membrane-spanning segment. Residues Pro483–Met517 are Cytoplasmic-facing.

This sequence belongs to the major facilitator superfamily. Sugar transporter (TC 2.A.1.1) family. Trehalose transporter subfamily.

Its subcellular location is the cell membrane. High-capacity facilitative transporter for trehalose. Does not transport maltose, sucrose or lactose. Mediates the bidirectional transfer of trehalose. Responsible for the transport of trehalose synthesized in the fat body and the incorporation of trehalose into other tissues that require a carbon source, thereby regulating trehalose levels in the hemolymph. This chain is Facilitated trehalose transporter Tret1, found in Culex quinquefasciatus (Southern house mosquito).